Here is a 113-residue protein sequence, read N- to C-terminus: Dolichyl-diphosphooligosaccharide--protein glycosyltransferase subunit DAD1 (113 aa).

At 1–30 (MGSSAFEVLTFFLKDYKANTPQKLKIIDAY) the chain is on the cytoplasmic side. A helical transmembrane segment spans residues 31–51 (LLYILLTGINQFLYCCLVGTF). A topological domain (lumenal) is located at residue Pro-52. Residues 53–73 (FNSFLSGFISCVASFVLGVCL) traverse the membrane as a helical segment. The Cytoplasmic segment spans residues 74–92 (RLQVNPQNSSNFCGIPPER). Residues 93–113 (AFADFIFAHVVLHLVVMNFIG) traverse the membrane as a helical segment.

Belongs to the DAD/OST2 family. In terms of assembly, component of the oligosaccharyltransferase (OST) complex. As to expression, widely expressed. Greatest expression seen in the epidermis, intermediate expression in the fat body and midgut and mild expression observed in the silk gland.

It is found in the endoplasmic reticulum membrane. Its pathway is protein modification; protein glycosylation. Its function is as follows. Subunit of the oligosaccharyl transferase (OST) complex that catalyzes the initial transfer of a defined glycan (Glc(3)Man(9)GlcNAc(2) in eukaryotes) from the lipid carrier dolichol-pyrophosphate to an asparagine residue within an Asn-X-Ser/Thr consensus motif in nascent polypeptide chains, the first step in protein N-glycosylation. N-glycosylation occurs cotranslationally and the complex associates with the Sec61 complex at the channel-forming translocon complex that mediates protein translocation across the endoplasmic reticulum (ER). All subunits are required for a maximal enzyme activity. In Araneus ventricosus (Orbweaver spider), this protein is Dolichyl-diphosphooligosaccharide--protein glycosyltransferase subunit DAD1.